A 142-amino-acid polypeptide reads, in one-letter code: Transcriptional regulator MraZ (142 aa).

2 consecutive SpoVT-AbrB domains span residues 5–47 and 76–119; these read EYQH…TINE and ACIV…SREK.

The protein belongs to the MraZ family. Forms oligomers.

It is found in the cytoplasm. It localises to the nucleoid. The sequence is that of Transcriptional regulator MraZ from Clostridium botulinum (strain Eklund 17B / Type B).